We begin with the raw amino-acid sequence, 159 residues long: U1 small nuclear ribonucleoprotein C (159 aa).

The Matrin-type zinc-finger motif lies at 4 to 36; that stretch reads FYCDYCDTYLTHDSPSVRKTHCSGRKHKENVKD. Tyr-8 is subject to Phosphotyrosine. Residue Ser-17 is modified to Phosphoserine. Lys-52 carries the post-translational modification N6-acetyllysine. Disordered regions lie at residues 62–96 and 140–159; these read IPPT…PAPH and RPPA…RPDR. Residues 63–92 are compositionally biased toward pro residues; it reads PPTPFSAPPPAGAMIPPPPSLPGPPRPGMM.

Belongs to the U1 small nuclear ribonucleoprotein C family. As to quaternary structure, component of the U1 snRNP. The U1 snRNP is composed of the U1 snRNA and the 7 core Sm proteins SNRPB, SNRPD1, SNRPD2, SNRPD3, SNRPE, SNRPF and SNRPG that assemble in a heptameric protein ring on the Sm site of the small nuclear RNA to form the core snRNP, and at least 3 U1 snRNP-specific proteins SNRNP70/U1-70K, SNRPA/U1-A and SNRPC/U1-C. SNRPC/U1-C interacts with U1 snRNA and the 5' splice-site region of the pre-mRNA. Interacts (via N-terminus) with TIA1 (via C-terminus); thereby promoting spliceosomal U1 snRNP recruitment to 5' splice sites.

It is found in the nucleus. Its function is as follows. Component of the spliceosomal U1 snRNP, which is essential for recognition of the pre-mRNA 5' splice-site and the subsequent assembly of the spliceosome. SNRPC/U1-C is directly involved in initial 5' splice-site recognition for both constitutive and regulated alternative splicing. The interaction with the 5' splice-site seems to precede base-pairing between the pre-mRNA and the U1 snRNA. Stimulates commitment or early (E) complex formation by stabilizing the base pairing of the 5' end of the U1 snRNA and the 5' splice-site region. The sequence is that of U1 small nuclear ribonucleoprotein C from Homo sapiens (Human).